Consider the following 589-residue polypeptide: Proton pump-interactor 2 (589 aa).

Residues 205-245 are a coiled coil; the sequence is EDSLAEKEASINRVKSMAVELNEVKKELDAITWKINHLSDK. Basic and acidic residues-rich tracts occupy residues 370–383, 395–408, 426–450, and 504–534; these read KGGEKVHETNREDS, TDKRKKETRKKAMD, VYEKPKKEEEEVDEETLKEREREEQ, and ESDHSQEVTKDLEKVRTLAVSGKEKHQKERS. 2 disordered regions span residues 370 to 450 and 485 to 534; these read KGGE…REEQ and KECE…KERS. Residues 431 to 500 adopt a coiled-coil conformation; sequence KKEEEEVDEE…AKKKAAANSS (70 aa). Residues 568 to 588 form a helical membrane-spanning segment; it reads WVWGLSSAALAVALFLVVLLL.

It belongs to the plant Proton pump-interactor protein family. As to expression, expressed in seedlings and flowers.

Its subcellular location is the cell membrane. It localises to the endoplasmic reticulum membrane. Functionally, may regulate plasma membrane ATPase activity. This chain is Proton pump-interactor 2 (PPI2), found in Arabidopsis thaliana (Mouse-ear cress).